Here is a 350-residue protein sequence, read N- to C-terminus: Cytosolic Fe-S cluster assembly factor NBP35 (350 aa).

The segment at 1 to 30 is disordered; it reads MENGDIPEDANEHCPGPQSESAGKSDSCAG. The [4Fe-4S] cluster site is built by cysteine 14, cysteine 28, cysteine 31, and cysteine 37. Position 67–74 (67–74) interacts with ATP; that stretch reads GKGGVGKS.

It belongs to the Mrp/NBP35 ATP-binding proteins family. NUBP1/NBP35 subfamily. As to quaternary structure, homodimer and homotetramer. Predominantly homodimeric. It depends on [4Fe-4S] cluster as a cofactor.

The protein localises to the cytoplasm. In terms of biological role, component of the cytosolic iron-sulfur (Fe-S) protein assembly (CIA) machinery. Required for maturation of extramitochondrial Fe-S proteins. Functions as a Fe-S scaffold, mediating the de novo assembly of an Fe-S cluster and its transfer to target apoproteins. Essential for embryo development. This Arabidopsis thaliana (Mouse-ear cress) protein is Cytosolic Fe-S cluster assembly factor NBP35.